A 140-amino-acid chain; its full sequence is Holo-[acyl-carrier-protein] synthase (140 aa).

Asp-8 and Glu-62 together coordinate Mg(2+).

It belongs to the P-Pant transferase superfamily. AcpS family. Mg(2+) serves as cofactor.

It localises to the cytoplasm. The catalysed reaction is apo-[ACP] + CoA = holo-[ACP] + adenosine 3',5'-bisphosphate + H(+). Its function is as follows. Transfers the 4'-phosphopantetheine moiety from coenzyme A to a Ser of acyl-carrier-protein. The polypeptide is Holo-[acyl-carrier-protein] synthase (Cupriavidus taiwanensis (strain DSM 17343 / BCRC 17206 / CCUG 44338 / CIP 107171 / LMG 19424 / R1) (Ralstonia taiwanensis (strain LMG 19424))).